Here is a 250-residue protein sequence, read N- to C-terminus: MRLKTILLGFCAFHVARSKMVVNLINMIDEQTGEQRKVVPLELERFFPLDFDEILLRDTMQRNAAMEEEDYRELGKRDIEVAFQNTGVTLDDRLQSLPAISLFGRYVRDIDGMSEALADGDRHIMVFAPTNDAITAMPKKPWEYPRNIDKLEQAGASASEIHDAIQANVRRFVLTHVVSDIDLSKVGREDGSAVLTSDLHPKSMQGDILLRKDGDRYTVSSKTGRDLAVEEVHTASNGIVLVIDSSLDAE.

Residues 1-18 form the signal peptide; that stretch reads MRLKTILLGFCAFHVARS. Positions 87–247 constitute an FAS1 domain; the sequence is GVTLDDRLQS…GIVLVIDSSL (161 aa).

Its subcellular location is the vacuole. This Eremothecium gossypii (strain ATCC 10895 / CBS 109.51 / FGSC 9923 / NRRL Y-1056) (Yeast) protein is FAS1 domain-containing protein AER383W.